The following is an 816-amino-acid chain: Ribonucleoside-diphosphate reductase large subunit (816 aa).

The ATP-cone domain occupies 1 to 92 (MYVVKRDGRQ…VSNLHKNTKK (92 aa)). ATP is bound by residues 5–6 (KR), 11–17 (ETVHFDK), threonine 53, and aspartate 57. GDP-binding residues include serine 202 and serine 217. Residues cysteine 218 and cysteine 444 are joined by a disulfide bond. DTTP-binding positions include 226-228 (DSI), lysine 243, arginine 256, and 263-264 (RG). Asparagine 427 lines the GDP pocket. The active-site Proton acceptor is the asparagine 427. Residue cysteine 429 is the Cysteine radical intermediate of the active site. GDP is bound by residues glutamate 431 and 623–626 (TAST). Catalysis depends on glutamate 431, which acts as the Proton acceptor.

Belongs to the ribonucleoside diphosphate reductase large chain family. Heterotetramer of two large/R1 and two small/R2 subunits. A radical transfer pathway may occur between 'Tyr-125' of protein R2 and R1. In terms of processing, contains a disulfide bonds. Binding of the substrate occurs primarily when the active-site cysteines are reduced. As to expression, highly expressed in actively growing tissues such as young leaves, shoot apices, inflorescences and carpels. Very low expression in cotyledons, adult and cauline leaves and senescent leaves.

It localises to the cytoplasm. It carries out the reaction a 2'-deoxyribonucleoside 5'-diphosphate + [thioredoxin]-disulfide + H2O = a ribonucleoside 5'-diphosphate + [thioredoxin]-dithiol. Under complex allosteric control mediated by deoxynucleoside triphosphates and ATP binding to separate specificity and activation sites on the large subunit. The type of nucleotide bound at the specificity site determines substrate preference. It seems probable that ATP makes the enzyme reduce CDP and UDP, dGTP favors ADP reduction and dTTP favors GDP reduction. Stimulated by ATP and inhibited by dATP binding to the activity site. Functionally, provides the precursors necessary for DNA synthesis. Catalyzes the biosynthesis of deoxyribonucleotides from the corresponding ribonucleotides. R1 contains the binding sites for both substrates and allosteric effectors and carries out the actual reduction of the ribonucleotide. Ribonucleotide reductase (RNR) complex function is essential for efficient organellar DNA degradation in pollen. Involved in chloroplast division. The sequence is that of Ribonucleoside-diphosphate reductase large subunit from Arabidopsis thaliana (Mouse-ear cress).